A 416-amino-acid polypeptide reads, in one-letter code: Adenosylhomocysteinase (416 aa).

3 residues coordinate substrate: Thr55, Asp126, and Glu151. 152-154 (TTT) contributes to the NAD(+) binding site. The substrate site is built by Lys181 and Asp185. NAD(+)-binding positions include Asn186, 215 to 220 (GYGWVG), Glu238, Asn273, 294 to 296 (AGH), and Asn341.

The protein belongs to the adenosylhomocysteinase family. NAD(+) is required as a cofactor.

The protein localises to the cytoplasm. It catalyses the reaction S-adenosyl-L-homocysteine + H2O = L-homocysteine + adenosine. It functions in the pathway amino-acid biosynthesis; L-homocysteine biosynthesis; L-homocysteine from S-adenosyl-L-homocysteine: step 1/1. Its function is as follows. May play a key role in the regulation of the intracellular concentration of adenosylhomocysteine. The protein is Adenosylhomocysteinase of Aeropyrum pernix (strain ATCC 700893 / DSM 11879 / JCM 9820 / NBRC 100138 / K1).